The following is a 912-amino-acid chain: uncharacterized protein (912 aa).

Basic and acidic residues-rich tracts occupy residues 20-32 (IERL…AEPA) and 39-67 (HEYE…EDKT). The segment at 20–91 (IERLREQGRA…KPTLPQPETD (72 aa)) is disordered. Basic residues predominate over residues 68-77 (RHKKLKHRSR).

This is an uncharacterized protein from Penicillium chrysogenum virus (isolate Caston/2003) (PcV).